The following is a 438-amino-acid chain: Cell division cycle-associated 7-like protein (438 aa).

An Integrase domain-binding motif 1 (IBM1) motif is present at residues I9–V33. Position 21 is a phosphoserine (S21). The segment at V56–D115 is PSIP1-binding. Positions F63–E89 match the Integrase domain-binding motif 2 (IBM2) motif. Residues D74 to S199 are disordered. T75 carries the post-translational modification Phosphothreonine. Acidic residues predominate over residues T75 to T86. A Phosphoserine modification is found at S77. T86 bears the Phosphothreonine mark. S101, S104, S135, S136, and S159 each carry phosphoserine. Positions R152–D167 are enriched in basic and acidic residues. A compositionally biased stretch (basic residues) spans L168 to P177. 2 positions are modified to phosphoserine: S183 and S185. The MYC-binding stretch occupies residues A201–L223. Glycyl lysine isopeptide (Lys-Gly) (interchain with G-Cter in SUMO2) cross-links involve residues K210 and K213. At S249 the chain carries Phosphoserine.

Interacts with MYC. Interacts (via IBM motifs) with PSIP1 (via IBD domain); phosphorylation increases its affinity for PSIP1. Phosphorylation increases its interaction with PSIP1. Expressed in all tissues but not detected in total brain.

The protein localises to the cytoplasm. It is found in the nucleus. In terms of biological role, plays a role in transcriptional regulation as a repressor that inhibits monoamine oxidase A (MAOA) activity and gene expression by binding to the promoter. Plays an important oncogenic role in mediating the full transforming effect of MYC in medulloblastoma cells. Involved in apoptotic signaling pathways; May act downstream of P38-kinase and BCL-2, but upstream of CASP3/caspase-3 as well as CCND1/cyclin D1 and E2F1. The protein is Cell division cycle-associated 7-like protein (Cdca7l) of Mus musculus (Mouse).